The primary structure comprises 459 residues: Cysteine--tRNA ligase (459 aa).

Position 28 (Cys28) interacts with Zn(2+). A 'HIGH' region motif is present at residues 30-40 (VTVYDLCHIGH). Zn(2+)-binding residues include Cys209, His234, and Glu238. A 'KMSKS' region motif is present at residues 266–270 (KMSKS). Lys269 contributes to the ATP binding site.

This sequence belongs to the class-I aminoacyl-tRNA synthetase family. As to quaternary structure, monomer. It depends on Zn(2+) as a cofactor.

The protein resides in the cytoplasm. The catalysed reaction is tRNA(Cys) + L-cysteine + ATP = L-cysteinyl-tRNA(Cys) + AMP + diphosphate. In Histophilus somni (strain 2336) (Haemophilus somnus), this protein is Cysteine--tRNA ligase.